The primary structure comprises 119 residues: Large ribosomal subunit protein bL20 (119 aa).

The protein belongs to the bacterial ribosomal protein bL20 family.

Binds directly to 23S ribosomal RNA and is necessary for the in vitro assembly process of the 50S ribosomal subunit. It is not involved in the protein synthesizing functions of that subunit. The protein is Large ribosomal subunit protein bL20 of Halorhodospira halophila (strain DSM 244 / SL1) (Ectothiorhodospira halophila (strain DSM 244 / SL1)).